The following is a 485-amino-acid chain: MSSLSILFATSEMAPWVKTGGLGDVAAALPAALRKAGHDIRVLLPAYPALKQAFPTATTVAELPAFAPGLPASRLLAAQTGKLELLLLDCPELYDRPGNPYLDATGRDWPDNALRFGLLSRVAARLGQPDSPLSWQPDIVHANDWQTALAPAYLHYQGGAASVVTVHNIAFQGCFGREMLAALGLPEHAWRFDGVEYHDQLSFLKAGLQLASQISTVSPTYAREIQDEHFGYGLAPLLRHRSAELRGILNGVDTDLWNPATDPVLATGYAANRLAAKRTNKAALQTEMGLEVTADRPLFGVISRLTSQKGLDLLLTVAEGLPELPAQLVVLGSGDKLMEAGFVELAKRFPAQIVVKIGFDEGLAHRIEAGADCFVMPSRFEPCGLNQMYSLRYGTPPIVRATGGLADTVVDVCEDTLADKSANGFVLDGDTPHALWLTIEHVCRTWQDKKLWQRIQQNGMRRDFSWTHAANEYVALYRDAIATRA.

Lys-18 serves as a coordination point for ADP-alpha-D-glucose.

The protein belongs to the glycosyltransferase 1 family. Bacterial/plant glycogen synthase subfamily.

It carries out the reaction [(1-&gt;4)-alpha-D-glucosyl](n) + ADP-alpha-D-glucose = [(1-&gt;4)-alpha-D-glucosyl](n+1) + ADP + H(+). It participates in glycan biosynthesis; glycogen biosynthesis. Its function is as follows. Synthesizes alpha-1,4-glucan chains using ADP-glucose. The chain is Glycogen synthase from Dechloromonas aromatica (strain RCB).